The primary structure comprises 348 residues: Dihydroorotase (348 aa).

Zn(2+) is bound by residues His17 and His19. Substrate-binding positions include 19-21 (HLR) and Asn45. The Zn(2+) site is built by Lys103, His140, and His178. Lys103 is subject to N6-carboxylysine. Residue His140 coordinates substrate. Leu223 provides a ligand contact to substrate. Asp251 provides a ligand contact to Zn(2+). Asp251 is a catalytic residue. Substrate contacts are provided by His255 and Ala267.

This sequence belongs to the metallo-dependent hydrolases superfamily. DHOase family. Class II DHOase subfamily. Homodimer. Zn(2+) is required as a cofactor.

The catalysed reaction is (S)-dihydroorotate + H2O = N-carbamoyl-L-aspartate + H(+). It functions in the pathway pyrimidine metabolism; UMP biosynthesis via de novo pathway; (S)-dihydroorotate from bicarbonate: step 3/3. Functionally, catalyzes the reversible cyclization of carbamoyl aspartate to dihydroorotate. This Escherichia coli O7:K1 (strain IAI39 / ExPEC) protein is Dihydroorotase.